Reading from the N-terminus, the 440-residue chain is Transposon Ty1-JR1 Gag polyprotein (440 aa).

Residues 1–16 (MESQQLSQHSHISHGS) are compositionally biased toward low complexity. Disordered stretches follow at residues 1–93 (MESQ…MMTQ), 126–173 (PQSQ…RPPP), and 352–440 (GSRN…PGTY). Polar residues-rich tracts occupy residues 48 to 60 (TKAN…TPAS) and 127 to 152 (QSQF…GNTF). Positions 153-165 (TDSSSADSDMTST) are enriched in low complexity. Residues 299-401 (NNGIHINNKV…NSKSKTARAH (103 aa)) form an RNA-binding region. Positions 402-418 (NVSTSNNSPSTDNDSIS) are enriched in low complexity. Phosphoserine is present on Ser-416. Over residues 419–428 (KSTTEPIQLN) the composition is skewed to polar residues. Positions 429–440 (NKHDLHLRPGTY) are enriched in basic and acidic residues.

Homotrimer.

The protein resides in the cytoplasm. Capsid protein (CA) is the structural component of the virus-like particle (VLP), forming the shell that encapsulates the retrotransposons dimeric RNA genome. The particles are assembled from trimer-clustered units and there are holes in the capsid shells that allow for the diffusion of macromolecules. CA also has nucleocapsid-like chaperone activity, promoting primer tRNA(i)-Met annealing to the multipartite primer-binding site (PBS), dimerization of Ty1 RNA and initiation of reverse transcription. The protein is Transposon Ty1-JR1 Gag polyprotein (TY1A-JR1) of Saccharomyces cerevisiae (strain ATCC 204508 / S288c) (Baker's yeast).